The chain runs to 273 residues: (5R)-carbapenem-3-carboxylate synthase (273 aa).

The Fe cation site is built by H101 and D103. Substrate is bound at residue G104. T130 is a 2-oxoglutarate binding site. H251 lines the Fe cation pocket. Positions 253, 263, and 267 each coordinate 2-oxoglutarate.

The protein belongs to the TfdA dioxygenase family. In terms of assembly, homohexamer. Dimer of trimers. Requires Fe(2+) as cofactor.

Its subcellular location is the cytoplasm. It catalyses the reaction (3S,5S)-carbapenam-3-caboxylate + 2-oxoglutarate + O2 = (5R)-carbapenem-3-carboxylate + succinate + CO2 + H2O. With respect to regulation, inhibited by L-N-acetylproline and by D-N-acetylproline. Catalyzes the Fe(2+) and alpha-ketoglutarate-dependent conversion of (3S,5S)-carbapenam to (5R)-carbapenem, an essential step in carbapenem antibiotic biosynthesis. The protein is (5R)-carbapenem-3-carboxylate synthase (carC) of Pectobacterium carotovorum subsp. carotovorum (Erwinia carotovora subsp. carotovora).